The sequence spans 256 residues: Thiazole synthase (256 aa).

Catalysis depends on K95, which acts as the Schiff-base intermediate with DXP. Residues G156, 183–184, and 205–206 each bind 1-deoxy-D-xylulose 5-phosphate; these read AG and NT.

It belongs to the ThiG family. In terms of assembly, homotetramer. Forms heterodimers with either ThiH or ThiS.

Its subcellular location is the cytoplasm. It catalyses the reaction [ThiS sulfur-carrier protein]-C-terminal-Gly-aminoethanethioate + 2-iminoacetate + 1-deoxy-D-xylulose 5-phosphate = [ThiS sulfur-carrier protein]-C-terminal Gly-Gly + 2-[(2R,5Z)-2-carboxy-4-methylthiazol-5(2H)-ylidene]ethyl phosphate + 2 H2O + H(+). It functions in the pathway cofactor biosynthesis; thiamine diphosphate biosynthesis. Its function is as follows. Catalyzes the rearrangement of 1-deoxy-D-xylulose 5-phosphate (DXP) to produce the thiazole phosphate moiety of thiamine. Sulfur is provided by the thiocarboxylate moiety of the carrier protein ThiS. In vitro, sulfur can be provided by H(2)S. This Gluconacetobacter diazotrophicus (strain ATCC 49037 / DSM 5601 / CCUG 37298 / CIP 103539 / LMG 7603 / PAl5) protein is Thiazole synthase.